The following is a 162-amino-acid chain: UPF0254 protein MTH1148 homolog (162 aa).

The protein belongs to the UPF0254 family.

This is UPF0254 protein MTH1148 homolog from Methanothermobacter thermautotrophicus (strain Winter) (Methanobacterium thermoautotrophicum).